A 351-amino-acid polypeptide reads, in one-letter code: uncharacterized protein (351 aa).

The first 27 residues, 1–27 (MKNKKRVLIASSLSCAILLLSAATTQA), serve as a signal peptide directing secretion. The segment at 28-71 (NSAHKDSQDQNKKEHVDKSQQKDKRNVTNKDKNSTVPDDIGKNG) is disordered. Over residues 30–60 (AHKDSQDQNKKEHVDKSQQKDKRNVTNKDKN) the composition is skewed to basic and acidic residues.

Belongs to the aerolysin family.

This is an uncharacterized protein from Staphylococcus aureus (strain N315).